A 282-amino-acid chain; its full sequence is Protein canopy homolog 3 (282 aa).

The first 33 residues, 1 to 33, serve as a signal peptide directing secretion; that stretch reads MEPLPEPASGPRPRPHRLLLLSLLLLLLPLLPA. Residues 53-275 form the Saposin B-type domain; it reads SKCEVCKYVA…EGIQKASPLT (223 aa). 3 disulfide bridges follow: C55–C212, C58–C200, and C110–C172. The N-linked (GlcNAc...) asparagine glycan is linked to N159. Positions 159–185 form a coiled coil; it reads NETSAEVADLKKQCDVLVEEFEEVIED. The interval 221 to 282 is disordered; that stretch reads KGDTAALGGK…PLTHSPPDEL (62 aa). The span at 255–266 shows a compositional bias: acidic residues; it reads DLDGDPSPEEDE.

This sequence belongs to the canopy family. As to quaternary structure, interacts with HSP90B1; this interaction is disrupted in the presence of ATP. Interacts with TLR1, TLR2, TLR4 and TLR9.

The protein resides in the endoplasmic reticulum. Functionally, toll-like receptor (TLR)-specific co-chaperone for HSP90B1. Required for proper TLR folding, except that of TLR3, and hence controls TLR exit from the endoplasmic reticulum. Consequently, required for both innate and adaptive immune responses. This Bos taurus (Bovine) protein is Protein canopy homolog 3 (CNPY3).